A 304-amino-acid polypeptide reads, in one-letter code: Non-specific ribonucleoside hydrolase RihC (304 aa).

H233 is a catalytic residue.

Belongs to the IUNH family. RihC subfamily.

In terms of biological role, hydrolyzes both purine and pyrimidine ribonucleosides with a broad-substrate specificity. The sequence is that of Non-specific ribonucleoside hydrolase RihC from Shigella sonnei (strain Ss046).